The primary structure comprises 114 residues: FK506-binding protein 1 (114 aa).

Residues 26–114 (GDLVTIHYTG…IFEVELLKVN (89 aa)) enclose the PPIase FKBP-type domain.

It belongs to the FKBP-type PPIase family. FKBP1 subfamily.

It localises to the cytoplasm. The catalysed reaction is [protein]-peptidylproline (omega=180) = [protein]-peptidylproline (omega=0). With respect to regulation, inhibited by both FK506 and rapamycin. Functionally, PPIases accelerate the folding of proteins. It catalyzes the cis-trans isomerization of proline imidic peptide bonds in oligopeptides. The sequence is that of FK506-binding protein 1 (FPR1) from Eremothecium gossypii (strain ATCC 10895 / CBS 109.51 / FGSC 9923 / NRRL Y-1056) (Yeast).